Here is a 446-residue protein sequence, read N- to C-terminus: C4-dicarboxylate transport protein (446 aa).

The next 9 helical transmembrane spans lie at 20-40 (HLYV…HFYP), 56-76 (LVKM…IAGM), 91-111 (IYFL…ANVV), 160-180 (GDIL…AGVG), 200-220 (LVHI…AFTI), 233-253 (FLIL…LGLV), 319-339 (IYMT…LSLG), 344-364 (LLLV…AGFI), and 367-387 (AATL…ILGI).

The protein belongs to the dicarboxylate/amino acid:cation symporter (DAACS) (TC 2.A.23) family.

The protein localises to the cell inner membrane. Its function is as follows. Responsible for the transport of dicarboxylates such as succinate, fumarate, and malate from the periplasm across the membrane. In Azorhizobium caulinodans (strain ATCC 43989 / DSM 5975 / JCM 20966 / LMG 6465 / NBRC 14845 / NCIMB 13405 / ORS 571), this protein is C4-dicarboxylate transport protein.